The following is a 260-amino-acid chain: 5'-nucleotidase SurE (260 aa).

Residues Asp-8, Asp-9, Ser-43, and Asn-96 each contribute to the a divalent metal cation site.

Belongs to the SurE nucleotidase family. A divalent metal cation serves as cofactor.

It is found in the cytoplasm. It catalyses the reaction a ribonucleoside 5'-phosphate + H2O = a ribonucleoside + phosphate. Functionally, nucleotidase that shows phosphatase activity on nucleoside 5'-monophosphates. In Ruegeria pomeroyi (strain ATCC 700808 / DSM 15171 / DSS-3) (Silicibacter pomeroyi), this protein is 5'-nucleotidase SurE.